A 1291-amino-acid chain; its full sequence is Ethylene-insensitive protein 2.2 (1291 aa).

6 helical membrane-spanning segments follow: residues 18–38 (ALPA…PGKW), 48–68 (FGFD…LCQY), 96–116 (FLGV…ILGI), 128–148 (LSTC…FATL), 155–175 (SFLS…GVLI), and 195–215 (SAFA…FFLH). N227 is a glycosylation site (N-linked (GlcNAc...) asparagine). The next 7 helical transmembrane spans lie at 231–251 (GALC…IYLV), 253–273 (YVLM…LLTF), 288–308 (VALC…ALTW), 335–355 (IIAV…GIYQ), 356–376 (LLIF…IPLF), 393–413 (FLEF…IIFV), and 441–461 (VLLI…ATPL). Residues 498 to 518 (TEEESIGGQEQLSGPGKSAES) are disordered. The N-linked (GlcNAc...) asparagine glycan is linked to N550. The interval 614–662 (AEKEDDEGDSWEPEESSKGVPGSTSSLTSDGPGSFRSLSGKSDEGGNGA) is disordered. Positions 617-627 (EDDEGDSWEPE) are enriched in acidic residues. Over residues 635 to 653 (GSTSSLTSDGPGSFRSLSG) the composition is skewed to polar residues. Phosphoserine is present on residues S647 and S664. Disordered regions lie at residues 742 to 768 (QIHS…GGQR) and 787 to 808 (GPSR…TLPS). A compositionally biased stretch (polar residues) spans 759 to 768 (NIDSSYGGQR). The residue at position 818 (T818) is a Phosphothreonine. The interval 836–856 (GSSSLNGQMDSPAPISPSLGP) is disordered. A glycan (N-linked (GlcNAc...) asparagine) is linked at N891. A Phosphoserine modification is found at S923. A glycan (N-linked (GlcNAc...) asparagine) is linked at N1027. Positions 1210–1229 (HRSSPPVSNGMLPPASKPGR) are disordered. The Nuclear localization signal motif lies at 1262–1269 (DVAFPKGK).

The protein belongs to the NRAMP (TC 2.A.55) family.

Its subcellular location is the endoplasmic reticulum membrane. The protein resides in the nucleus. It is found in the cytoplasm. Its function is as follows. Central factor in signaling pathways regulated by ethylene (ET) and involved in various processes including development, plant defense, senescence, nucleotide sugar flux, and tropisms. Functionally, trafficking signal inducing ethylene response. The nuclear localization is both necessary and sufficient to activate EIN3-mediated transcription and ethylene responses. The sequence is that of Ethylene-insensitive protein 2.2 from Populus trichocarpa (Western balsam poplar).